Here is a 236-residue protein sequence, read N- to C-terminus: MICOS complex subunit MIC25 (236 aa).

Residues 1 to 11 (MGSAESREGRR) are compositionally biased toward basic and acidic residues. The interval 1–22 (MGSAESREGRRASFGMDEEERV) is disordered. Glycine 2 carries the N-myristoyl glycine lipid modification. Serine 13 and serine 31 each carry phosphoserine. 2 disordered regions span residues 34–86 (VVNR…VQVD) and 109–132 (EREAAASPRSVTLRRGEGGVDQEK). Residues 48 to 58 (GLLAPPAAALG) show a composition bias toward low complexity. 2 stretches are compositionally biased toward basic and acidic residues: residues 62 to 71 (GREKDSKPPR) and 122 to 132 (RRGEGGVDQEK). Residues 127–167 (GVDQEKQRLAQRARELESQEEELRCRDAFYKEQLGRLERQN) are a coiled coil. One can recognise a CHCH domain in the interval 195-236 (EPVCSGLQAQILRCYRDRLQEVLLCADLVRAYQHCVSSAHKG). Short sequence motifs (cx9C motif) lie at residues 198-208 (CSGLQAQILRC) and 219-229 (CADLVRAYQHC). 2 disulfides stabilise this stretch: cysteine 198–cysteine 229 and cysteine 208–cysteine 219.

The protein belongs to the MICOS complex subunit Mic19 family. Metazoan Mic25 subfamily. Component of the mitochondrial contact site and cristae organizing system (MICOS) complex, composed of at least MICOS10/MIC10, CHCHD3/MIC19, CHCHD6/MIC25, APOOL/MIC27, IMMT/MIC60, APOO/MIC23/MIC26 and MICOS13/MIC13. This complex was also known under the names MINOS or MitOS complex. The MICOS complex associates with mitochondrial outer membrane proteins SAMM50, MTX1 and MTX2 (together described as components of the mitochondrial outer membrane sorting assembly machinery (SAM) complex) and DNAJC11, mitochondrial inner membrane protein TMEM11 and with HSPA9. The MICOS and SAM complexes together with DNAJC11 are part of a large protein complex spanning both membranes termed the mitochondrial intermembrane space bridging (MIB) complex. Interacts with DISC1. Interacts with IMMT/MIC60.

The protein localises to the mitochondrion inner membrane. It is found in the mitochondrion. Component of the MICOS complex, a large protein complex of the mitochondrial inner membrane that plays crucial roles in the maintenance of crista junctions, inner membrane architecture, and formation of contact sites to the outer membrane. The protein is MICOS complex subunit MIC25 (CHCHD6) of Bos taurus (Bovine).